The sequence spans 124 residues: Kinocilin (124 aa).

Transmembrane regions (helical) follow at residues 13-33 (LQLA…GVSV) and 40-60 (VGGI…YPFL). Positions 80–124 (PNSGPDHGEGRSSNNSNKEGARSGLSTVTRTLEKLKPGGRGTEEG) are disordered. Residues 90 to 109 (RSSNNSNKEGARSGLSTVTR) show a composition bias toward polar residues. Positions 110 to 124 (TLEKLKPGGRGTEEG) are enriched in basic and acidic residues.

As to expression, preferentially expressed in the inner ear and testis. Localizes mainly in the kinocilium of sensory cells in the inner ear. Also present in the manchette of the spermatids, a transient structure enriched in interconnected microtubules (at protein level).

It is found in the membrane. May play a role in stabilizing dense microtubular networks or in vesicular trafficking. The polypeptide is Kinocilin (Kncn) (Mus musculus (Mouse)).